The following is a 118-amino-acid chain: Large ribosomal subunit protein bL21c (118 aa).

This sequence belongs to the bacterial ribosomal protein bL21 family. Part of the 50S ribosomal subunit.

The protein localises to the plastid. It is found in the chloroplast. This protein binds to 23S rRNA. This chain is Large ribosomal subunit protein bL21c, found in Anthoceros angustus (Hornwort).